The primary structure comprises 472 residues: 3-isopropylmalate dehydratase large subunit (472 aa).

[4Fe-4S] cluster-binding residues include cysteine 351, cysteine 412, and cysteine 415.

The protein belongs to the aconitase/IPM isomerase family. LeuC type 1 subfamily. In terms of assembly, heterodimer of LeuC and LeuD. [4Fe-4S] cluster is required as a cofactor.

It carries out the reaction (2R,3S)-3-isopropylmalate = (2S)-2-isopropylmalate. It functions in the pathway amino-acid biosynthesis; L-leucine biosynthesis; L-leucine from 3-methyl-2-oxobutanoate: step 2/4. Catalyzes the isomerization between 2-isopropylmalate and 3-isopropylmalate, via the formation of 2-isopropylmaleate. The protein is 3-isopropylmalate dehydratase large subunit of Marinobacter nauticus (strain ATCC 700491 / DSM 11845 / VT8) (Marinobacter aquaeolei).